The following is a 40-amino-acid chain: Cytochrome b6-f complex subunit 5 (40 aa).

A helical transmembrane segment spans residues 5–25; the sequence is ILLGMVLGFVPVTIAGLLVAA.

It belongs to the PetG family. In terms of assembly, the 4 large subunits of the cytochrome b6-f complex are cytochrome b6, subunit IV (17 kDa polypeptide, PetD), cytochrome f and the Rieske protein, while the 4 small subunits are PetG, PetL, PetM and PetN. The complex functions as a dimer.

Its subcellular location is the cell inner membrane. In terms of biological role, component of the cytochrome b6-f complex, which mediates electron transfer between photosystem II (PSII) and photosystem I (PSI), cyclic electron flow around PSI, and state transitions. PetG is required for either the stability or assembly of the cytochrome b6-f complex. The protein is Cytochrome b6-f complex subunit 5 of Gloeobacter violaceus (strain ATCC 29082 / PCC 7421).